A 152-amino-acid chain; its full sequence is MIALIQRVKRADVRVGERVTGEIGAGLLALVCAERGDTEAAADKLLAKVLGYRVFSDAAGKMNLPVSNIDGAGRAGGLLLVSQFTLAADTNSGLRPSFTPAAPPDEGARLFDYFVAAARARHPIVETGEFGADMQVSLVNDGPVTFWLQVRP.

The short motif at 142-143 (GP) is the Gly-cisPro motif, important for rejection of L-amino acids element.

It belongs to the DTD family. As to quaternary structure, homodimer.

The protein localises to the cytoplasm. It carries out the reaction glycyl-tRNA(Ala) + H2O = tRNA(Ala) + glycine + H(+). The enzyme catalyses a D-aminoacyl-tRNA + H2O = a tRNA + a D-alpha-amino acid + H(+). In terms of biological role, an aminoacyl-tRNA editing enzyme that deacylates mischarged D-aminoacyl-tRNAs. Also deacylates mischarged glycyl-tRNA(Ala), protecting cells against glycine mischarging by AlaRS. Acts via tRNA-based rather than protein-based catalysis; rejects L-amino acids rather than detecting D-amino acids in the active site. By recycling D-aminoacyl-tRNA to D-amino acids and free tRNA molecules, this enzyme counteracts the toxicity associated with the formation of D-aminoacyl-tRNA entities in vivo and helps enforce protein L-homochirality. The polypeptide is D-aminoacyl-tRNA deacylase (Burkholderia multivorans (strain ATCC 17616 / 249)).